The sequence spans 94 residues: Co-chaperonin GroES (94 aa).

This sequence belongs to the GroES chaperonin family. Heptamer of 7 subunits arranged in a ring. Interacts with the chaperonin GroEL.

Its subcellular location is the cytoplasm. Its function is as follows. Together with the chaperonin GroEL, plays an essential role in assisting protein folding. The GroEL-GroES system forms a nano-cage that allows encapsulation of the non-native substrate proteins and provides a physical environment optimized to promote and accelerate protein folding. GroES binds to the apical surface of the GroEL ring, thereby capping the opening of the GroEL channel. This Latilactobacillus sakei subsp. sakei (strain 23K) (Lactobacillus sakei subsp. sakei) protein is Co-chaperonin GroES.